The sequence spans 196 residues: Cell division protein SepF (196 aa).

Positions 15–80 are disordered; sequence VEDDEEFNEP…PKRSASTFSK (66 aa). The segment covering 57–72 has biased composition (low complexity); the sequence is PAQTTPKPQTQTAAPK.

Belongs to the SepF family. As to quaternary structure, homodimer. Interacts with FtsZ.

It is found in the cytoplasm. In terms of biological role, cell division protein that is part of the divisome complex and is recruited early to the Z-ring. Probably stimulates Z-ring formation, perhaps through the cross-linking of FtsZ protofilaments. Its function overlaps with FtsA. The protein is Cell division protein SepF of Lactococcus lactis subsp. cremoris (strain MG1363).